A 140-amino-acid polypeptide reads, in one-letter code: MRHGVSGRKLNVTSSHRAAMFRNMAVALIKHEQITTTLPKAKELRPVVEKLITLGKRGDLHARRQAFAQLRDDAVVTKLFSAVAERYKGRAGGYSRVLKAGVRYGDNADMAVIELVDRDVAAKGQDSGPKQNVAEEQEAA.

The protein belongs to the bacterial ribosomal protein bL17 family. In terms of assembly, part of the 50S ribosomal subunit. Contacts protein L32.

This chain is Large ribosomal subunit protein bL17, found in Gluconobacter oxydans (strain 621H) (Gluconobacter suboxydans).